Here is a 505-residue protein sequence, read N- to C-terminus: uncharacterized protein (505 aa).

Residues Cys193 to Arg440 form the Radical SAM core domain. Positions 208, 216, and 219 each coordinate [4Fe-4S] cluster. The TRAM domain maps to Lys435 to Lys499.

Requires [4Fe-4S] cluster as cofactor.

This is an uncharacterized protein from Methanocaldococcus jannaschii (strain ATCC 43067 / DSM 2661 / JAL-1 / JCM 10045 / NBRC 100440) (Methanococcus jannaschii).